The following is a 795-amino-acid chain: Lon protease (795 aa).

The Lon N-terminal domain maps to 7–213 (SQILVVRGQV…KIIQAGIEDL (207 aa)). 379 to 386 (GPPGVGKS) contributes to the ATP binding site. Residues 615–795 (VSLPGIVNGM…YSDIYNKLFS (181 aa)) enclose the Lon proteolytic domain. Residues Ser702 and Lys745 contribute to the active site.

The protein belongs to the peptidase S16 family. In terms of assembly, homohexamer. Organized in a ring with a central cavity.

It localises to the cytoplasm. The catalysed reaction is Hydrolysis of proteins in presence of ATP.. In terms of biological role, ATP-dependent serine protease that mediates the selective degradation of mutant and abnormal proteins as well as certain short-lived regulatory proteins. Required for cellular homeostasis and for survival from DNA damage and developmental changes induced by stress. Degrades polypeptides processively to yield small peptide fragments that are 5 to 10 amino acids long. Binds to DNA in a double-stranded, site-specific manner. The polypeptide is Lon protease (Mycoplasma genitalium (strain ATCC 33530 / DSM 19775 / NCTC 10195 / G37) (Mycoplasmoides genitalium)).